A 314-amino-acid chain; its full sequence is Malate dehydrogenase (314 aa).

Residues 12–17 (GSGFTG) and D36 contribute to the NAD(+) site. The substrate site is built by R87 and R93. Residues N100 and 123–125 (LTN) each bind NAD(+). Substrate is bound at residue N125. At S149 the chain carries Phosphoserine. Position 156 (R156) interacts with substrate. Residue H180 is the Proton acceptor of the active site.

This sequence belongs to the LDH/MDH superfamily. MDH type 3 family.

The catalysed reaction is (S)-malate + NAD(+) = oxaloacetate + NADH + H(+). In terms of biological role, catalyzes the reversible oxidation of malate to oxaloacetate. The sequence is that of Malate dehydrogenase from Shouchella clausii (strain KSM-K16) (Alkalihalobacillus clausii).